We begin with the raw amino-acid sequence, 34 residues long: Photosystem I reaction center subunit XII (34 aa).

A helical membrane pass occupies residues 5-25 (ISSPEIFIALVVAAHAAILAL).

The protein belongs to the PsaM family.

The protein localises to the cellular thylakoid membrane. In Synechococcus sp. (strain CC9902), this protein is Photosystem I reaction center subunit XII.